Reading from the N-terminus, the 257-residue chain is Zinc transporter ZupT (257 aa).

The next 8 membrane-spanning stretches (helical) occupy residues L5 to G25, V32 to M52, G61 to L81, A109 to V129, L137 to A157, I171 to I191, L195 to L215, and G236 to I256. Residues N120 and E123 each contribute to the Fe(2+) site. The Zn(2+) site is built by E123 and H148. Residues N149, E152, and E181 each contribute to the Fe(2+) site. Zn(2+) is bound at residue E152.

The protein belongs to the ZIP transporter (TC 2.A.5) family. ZupT subfamily.

It localises to the cell inner membrane. The enzyme catalyses Zn(2+)(in) = Zn(2+)(out). Mediates zinc uptake. May also transport other divalent cations. This chain is Zinc transporter ZupT, found in Salmonella agona (strain SL483).